The sequence spans 329 residues: UDP-glucose 4-epimerase (329 aa).

NAD(+) contacts are provided by residues 13–14 (YV), 33–38 (HNLSTG), 53–54 (DI), 76–80 (FAAFS), Asn-95, Thr-120, Tyr-144, Lys-148, and Phe-172. Substrate is bound by residues Thr-120 and Tyr-144. Residue Tyr-144 is the Proton acceptor of the active site. Residues Asn-173, 190–191 (HL), 207–209 (SVY), Arg-221, and 281–284 (RGRD) each bind substrate.

Belongs to the NAD(P)-dependent epimerase/dehydratase family. As to quaternary structure, homodimer. Requires NAD(+) as cofactor.

It carries out the reaction UDP-alpha-D-glucose = UDP-alpha-D-galactose. It functions in the pathway carbohydrate metabolism; galactose metabolism. Involved in the metabolism of galactose. Catalyzes the conversion of UDP-galactose (UDP-Gal) to UDP-glucose (UDP-Glc) through a mechanism involving the transient reduction of NAD. This is UDP-glucose 4-epimerase (galE) from Streptomyces lividans.